Here is a 50-residue protein sequence, read N- to C-terminus: F420-non-reducing hydrogenase vhu subunit U (50 aa).

Ni(2+) contacts are provided by Sec-27 and Cys-30. A non-standard amino acid (selenocysteine) is located at residue Sec-27. Residues 34–50 (IIVKDEKGNKIIEVIKE) constitute a propeptide, removed in mature form.

This sequence belongs to the [NiFe]/[NiFeSe] hydrogenase large subunit family. The F420-non-reducing hydrogenase vhu is composed of four subunits; VhuA, VhuD, VhuG and VhuU. Ni(2+) is required as a cofactor.

The polypeptide is F420-non-reducing hydrogenase vhu subunit U (vhuU) (Methanocaldococcus jannaschii (strain ATCC 43067 / DSM 2661 / JAL-1 / JCM 10045 / NBRC 100440) (Methanococcus jannaschii)).